The primary structure comprises 379 residues: Glutamate 5-kinase (379 aa).

Residue lysine 8 coordinates ATP. 3 residues coordinate substrate: serine 49, aspartate 136, and asparagine 148. Residues 168–169 and 211–217 each bind ATP; these read TD and TGGMATK. A PUA domain is found at 276 to 354; that stretch reads MGKIYLDAGA…ERIASLLGYM (79 aa).

This sequence belongs to the glutamate 5-kinase family.

It is found in the cytoplasm. The enzyme catalyses L-glutamate + ATP = L-glutamyl 5-phosphate + ADP. It functions in the pathway amino-acid biosynthesis; L-proline biosynthesis; L-glutamate 5-semialdehyde from L-glutamate: step 1/2. Functionally, catalyzes the transfer of a phosphate group to glutamate to form L-glutamate 5-phosphate. The protein is Glutamate 5-kinase of Microcystis aeruginosa (strain NIES-843 / IAM M-2473).